We begin with the raw amino-acid sequence, 265 residues long: Mlc titration factor A (265 aa).

Zn(2+) is bound by residues His111, His148, His152, and Glu211.

This sequence belongs to the MtfA family. In terms of assembly, interacts with Mlc. The cofactor is Zn(2+).

It is found in the cytoplasm. In terms of biological role, involved in the modulation of the activity of the glucose-phosphotransferase system (glucose-PTS). Interacts with the transcriptional repressor Mlc, preventing its interaction with DNA and leading to the modulation of expression of genes regulated by Mlc, including ptsG, which encodes the PTS system glucose-specific EIICB component. Its function is as follows. Shows zinc-dependent metallopeptidase activity. The protein is Mlc titration factor A of Escherichia coli (strain 55989 / EAEC).